A 412-amino-acid polypeptide reads, in one-letter code: BSD domain-containing protein 1 (412 aa).

Residues 146 to 198 enclose the BSD domain; it reads WLAYWDPEHRKAEISELLVTSPSIRALYTKMVPAAVSHSEFWQRYFYKVHQLE. 2 stretches are compositionally biased toward basic and acidic residues: residues 208-219 and 255-271; these read KQRADQSVHSEE and HVED…RDHT. 2 disordered regions span residues 208 to 228 and 255 to 383; these read KQRA…EEED and HVED…EKDF. The span at 272–287 shows a compositional bias: low complexity; that stretch reads SITSPSESSESISPIT. Over residues 340-351 the composition is skewed to basic and acidic residues; that stretch reads THREDPPSDLRV. The segment covering 355 to 374 has biased composition (polar residues); sequence NSDSGKSTPSNNGQKGSSTD.

In Xenopus tropicalis (Western clawed frog), this protein is BSD domain-containing protein 1 (bsdc1).